We begin with the raw amino-acid sequence, 555 residues long: Urocanate hydratase (555 aa).

NAD(+)-binding positions include 52–53 (GG), Q130, 176–178 (GMG), E196, R201, 242–243 (NA), 263–267 (QTSAH), 273–274 (YL), and Y322. C410 is a catalytic residue. G492 provides a ligand contact to NAD(+).

Belongs to the urocanase family. The cofactor is NAD(+).

The protein resides in the cytoplasm. It carries out the reaction 4-imidazolone-5-propanoate = trans-urocanate + H2O. Its pathway is amino-acid degradation; L-histidine degradation into L-glutamate; N-formimidoyl-L-glutamate from L-histidine: step 2/3. In terms of biological role, catalyzes the conversion of urocanate to 4-imidazolone-5-propionate. The polypeptide is Urocanate hydratase (Shewanella baltica (strain OS223)).